We begin with the raw amino-acid sequence, 1657 residues long: Endoribonuclease Dicer homolog 4 (1657 aa).

The span at 1–14 (MGDAAAAAPAAAAA) shows a compositional bias: low complexity. The segment at 1–26 (MGDAAAAAPAAAAAGPSSTRGEPKDP) is disordered. Residues 37-214 (LCKRAVEENI…SHSFTEKGGR (178 aa)) form the Helicase ATP-binding domain. 50–57 (LGTGCGKT) is an ATP binding site. The DECH box motif lies at 157-160 (DECH). One can recognise a Helicase C-terminal domain in the interval 400-567 (NKFSVLINVL…TSNDMFDCLE (168 aa)). The Dicer dsRNA-binding fold domain occupies 585-675 (SVSLLHCYCD…LPGPGSRKNK (91 aa)). The region spanning 856–978 (DVSVHASYSS…LPPELCSLKV (123 aa)) is the PAZ domain. 2 RNase III domains span residues 1010–1173 (DVML…VEGG) and 1214–1358 (IAGL…LDSG). The Mg(2+) site is built by Glu-1252, Asp-1344, and Glu-1347. The 68-residue stretch at 1384–1451 (NPMRELRELC…AQETLSKLKN (68 aa)) folds into the DRBM 1 domain. A disordered region spans residues 1525 to 1556 (GSGKHDVNNGRNNQPKLATQSGRLPSEATEKS). A compositionally biased stretch (polar residues) spans 1533 to 1547 (NGRNNQPKLATQSGR). In terms of domain architecture, DRBM 2 spans 1569-1645 (TARSFLFELC…AQGALWCLKQ (77 aa)).

Belongs to the helicase family. Dicer subfamily. May interact with ARGONAUTE1 or PINHEAD through their common PAZ domains. The cofactor is Mg(2+). Mn(2+) is required as a cofactor. Expressed in roots, leaf blades, leaf sheaths, shoot apices and spikelets.

It localises to the nucleus. Involved in the RNA silencing pathway. Cleaves double-stranded RNA to produce small interfering RNAs (siRNAs) which target the selective destruction of complementary RNAs. Required for the production of 21 nucleotide siRNAs. Regulates shoot apical meristem (SAM) initiation and maintenance, leaf polarization and lemma polarity through the trans-acting siRNAS (ta-siRNAs) pathway, which probably modulate the expression of the ARF2, ARF3, ARF4, ARF14 and ARF15 genes. Can process endogenous 21 nucleotide siRNAs derived from an imperfect inverted repeat. May not be involved in microRNAs (miRNAs) production. The chain is Endoribonuclease Dicer homolog 4 (DCL4) from Oryza sativa subsp. japonica (Rice).